The following is a 635-amino-acid chain: Threonine--tRNA ligase (635 aa).

The TGS domain occupies 1 to 61 (MVSIRLPDGS…DRDASLAIVT (61 aa)). The catalytic stretch occupies residues 242-533 (DHRKLGKQLD…LIEHHAGAMP (292 aa)). Cys333, His384, and His510 together coordinate Zn(2+).

This sequence belongs to the class-II aminoacyl-tRNA synthetase family. Homodimer. Requires Zn(2+) as cofactor.

Its subcellular location is the cytoplasm. The catalysed reaction is tRNA(Thr) + L-threonine + ATP = L-threonyl-tRNA(Thr) + AMP + diphosphate + H(+). Catalyzes the attachment of threonine to tRNA(Thr) in a two-step reaction: L-threonine is first activated by ATP to form Thr-AMP and then transferred to the acceptor end of tRNA(Thr). Also edits incorrectly charged L-seryl-tRNA(Thr). The sequence is that of Threonine--tRNA ligase from Burkholderia pseudomallei (strain 1106a).